Consider the following 269-residue polypeptide: MFNNKMILIAGPCVIEGEDITLEIAGKLQSILAPYSDRIQWFFKSSYDKANRSSLNSFRGPGLTEGLRILAKVKETFGVGILTDVHTPQDAYAAAEVCNILQVPAFLCRQTDLLVATAETGAIVNLKKGQFLSPWDMEGPINKVLSTGNNKILLTERGCSFGYNNLVSDMRSIPVLSRSGFPVIFDATHSVQLPGALSTESGGLTEFVPTLSRAALAAGAHGLFIETHTNPKIAKSDAASMLSLEEFAALLPTWDQLFTCVSSFDMVSA.

The protein belongs to the KdsA family.

It is found in the cytoplasm. The catalysed reaction is D-arabinose 5-phosphate + phosphoenolpyruvate + H2O = 3-deoxy-alpha-D-manno-2-octulosonate-8-phosphate + phosphate. It participates in carbohydrate biosynthesis; 3-deoxy-D-manno-octulosonate biosynthesis; 3-deoxy-D-manno-octulosonate from D-ribulose 5-phosphate: step 2/3. The protein operates within bacterial outer membrane biogenesis; lipopolysaccharide biosynthesis. In Chlamydia pneumoniae (Chlamydophila pneumoniae), this protein is 2-dehydro-3-deoxyphosphooctonate aldolase (kdsA).